A 153-amino-acid chain; its full sequence is SsrA-binding protein (153 aa).

The protein belongs to the SmpB family.

The protein localises to the cytoplasm. Required for rescue of stalled ribosomes mediated by trans-translation. Binds to transfer-messenger RNA (tmRNA), required for stable association of tmRNA with ribosomes. tmRNA and SmpB together mimic tRNA shape, replacing the anticodon stem-loop with SmpB. tmRNA is encoded by the ssrA gene; the 2 termini fold to resemble tRNA(Ala) and it encodes a 'tag peptide', a short internal open reading frame. During trans-translation Ala-aminoacylated tmRNA acts like a tRNA, entering the A-site of stalled ribosomes, displacing the stalled mRNA. The ribosome then switches to translate the ORF on the tmRNA; the nascent peptide is terminated with the 'tag peptide' encoded by the tmRNA and targeted for degradation. The ribosome is freed to recommence translation, which seems to be the essential function of trans-translation. This chain is SsrA-binding protein, found in Lactobacillus delbrueckii subsp. bulgaricus (strain ATCC 11842 / DSM 20081 / BCRC 10696 / JCM 1002 / NBRC 13953 / NCIMB 11778 / NCTC 12712 / WDCM 00102 / Lb 14).